The following is an 81-amino-acid chain: Photosystem I iron-sulfur center (81 aa).

2 4Fe-4S ferredoxin-type domains span residues 2–31 (AHSVKVYDTCIGCTQCVRACPCDVLEMVPW) and 39–68 (IASAPRTEDCIGCKRCETACPTDFLSVRVY). [4Fe-4S] cluster is bound by residues Cys11, Cys14, Cys17, Cys21, Cys48, Cys51, Cys54, and Cys58.

As to quaternary structure, the eukaryotic PSI reaction center is composed of at least 11 subunits. Requires [4Fe-4S] cluster as cofactor.

The protein localises to the plastid. Its subcellular location is the chloroplast thylakoid membrane. It catalyses the reaction reduced [plastocyanin] + hnu + oxidized [2Fe-2S]-[ferredoxin] = oxidized [plastocyanin] + reduced [2Fe-2S]-[ferredoxin]. Its function is as follows. Apoprotein for the two 4Fe-4S centers FA and FB of photosystem I (PSI); essential for photochemical activity. FB is the terminal electron acceptor of PSI, donating electrons to ferredoxin. The C-terminus interacts with PsaA/B/D and helps assemble the protein into the PSI complex. Required for binding of PsaD and PsaE to PSI. PSI is a plastocyanin/cytochrome c6-ferredoxin oxidoreductase, converting photonic excitation into a charge separation, which transfers an electron from the donor P700 chlorophyll pair to the spectroscopically characterized acceptors A0, A1, FX, FA and FB in turn. This is Photosystem I iron-sulfur center from Gracilaria tenuistipitata var. liui (Red alga).